We begin with the raw amino-acid sequence, 908 residues long: MKELYLIDALNIIFRNYHVMKNYPLLNTQGENVNAFIGFFKTLFFIIKEKNPEHLIITFDSEVPTFRKQKYPSYKATRDLPPDDLIPQIGWIKEGLLKAKIPIFEMEGYEADDLLASFAKKAAKNNYLTYIISPDKDLLQTMSEYVKILKIENNSFIEMDNEYVTKKFGVNSFQIKDYLAIVGDRSDNIPGIKGIGAKGAANLLREFKTLDGIYSNLEIINKKHRELLIKEKENAFLSYELVSLEENLKIPEIENFALKNFSEEIISLFEKHSAIALIKTYKKDILKQEKENADQKSLFKQEPTTNSLDDINTIDTENVKYRSITTKIELDDLIESLKKAKYISIDTETSSLDTYTAKLIGISISFKEFEGYYIPIEAKGKIYIEKNYIIQKFNNLFESNPKIIGQNYKFDYKILKNNGFNPIPPYFDTMIAAYLIDTNSKVSLDFLAEKYLMHKNIKYEDVIQKNDNFANISLEMATSYSSEDADITFRLFNIFTKKLKEDKLDKLMHEIEMPFNKVIIEMEENGIYLDKEYLKEYGKELGKELEAIENEIIKSIGIDFNLNSPKQMHEILFEKLNLKLPEKMKKDSTDIKVLESLREQHESIENLIKYRQIAKLKSTYTDNLIELINYKTNRLHTSFIQTKTATGRITSINPNLQNIPIKDEKGRKIRKAFKPENGNIFISADYSQIELAILAHLSQDEVLIKAFENNKDIHTETASKLFKIEEKEITPNLRRIAKSINFGIIYRMSDFRLAKELGITKEEAKGFINSYFDSYPKIKEFIINQINFVRNAGYSETILKRRRYIKEINSNNYLERSAAERIAINSIIQGSAADIMKIAMVKVFNEFKSKKMESKILLQVHDEMLIESPIEEENEVKKILKIMMETAYTLNLPLRANIETGKSWGEIH.

The region spanning 1–318 (MKELYLIDAL…DDINTIDTEN (318 aa)) is the 5'-3' exonuclease domain. The 213-residue stretch at 319-531 (VKYRSITTKI…MEENGIYLDK (213 aa)) folds into the 3'-5' exonuclease domain. A polymerase region spans residues 532-908 (EYLKEYGKEL…ETGKSWGEIH (377 aa)).

It belongs to the DNA polymerase type-A family.

It catalyses the reaction DNA(n) + a 2'-deoxyribonucleoside 5'-triphosphate = DNA(n+1) + diphosphate. In terms of biological role, in addition to polymerase activity, this DNA polymerase exhibits 3'-5' and 5'-3' exonuclease activity. The sequence is that of DNA polymerase I (polA) from Borreliella burgdorferi (strain ATCC 35210 / DSM 4680 / CIP 102532 / B31) (Borrelia burgdorferi).